Consider the following 245-residue polypeptide: Thiamine phosphate phosphatase-like protein (245 aa).

Asp-9 functions as the Nucleophile in the catalytic mechanism. Residues Asp-9, Asp-11, and Asp-179 each contribute to the Mg(2+) site. Catalysis depends on Asp-11, which acts as the Proton donor.

The protein belongs to the HAD-like hydrolase superfamily. Monomer. Mg(2+) serves as cofactor.

It carries out the reaction thiamine phosphate + H2O = thiamine + phosphate. In terms of biological role, HAD-like hydrolase that has a thiamine monophosphate phosphatase activity in a heterologous system. Does not contribute to thiamine monophosphate phosphatase activity in planta. This is Thiamine phosphate phosphatase-like protein from Arabidopsis thaliana (Mouse-ear cress).